Reading from the N-terminus, the 636-residue chain is Probable Xaa-Pro aminopeptidase P (636 aa).

Mn(2+) contacts are provided by aspartate 414, aspartate 425, glutamate 523, and glutamate 537.

This sequence belongs to the peptidase M24B family. It depends on Mn(2+) as a cofactor.

The catalysed reaction is Release of any N-terminal amino acid, including proline, that is linked to proline, even from a dipeptide or tripeptide.. In terms of biological role, catalyzes the removal of a penultimate prolyl residue from the N-termini of peptides. In Ajellomyces capsulatus (strain H143) (Darling's disease fungus), this protein is Probable Xaa-Pro aminopeptidase P (AMPP).